Here is a 349-residue protein sequence, read N- to C-terminus: tRNA-specific 2-thiouridylase MnmA (349 aa).

ATP contacts are provided by residues G7–S14 and L33. C94 acts as the Nucleophile in catalysis. C94 and C193 are joined by a disulfide. G119 provides a ligand contact to ATP. Positions K143 to Q145 are interaction with tRNA. C193 acts as the Cysteine persulfide intermediate in catalysis. The interaction with tRNA stretch occupies residues R298–Y299.

The protein belongs to the MnmA/TRMU family.

Its subcellular location is the cytoplasm. The enzyme catalyses S-sulfanyl-L-cysteinyl-[protein] + uridine(34) in tRNA + AH2 + ATP = 2-thiouridine(34) in tRNA + L-cysteinyl-[protein] + A + AMP + diphosphate + H(+). Functionally, catalyzes the 2-thiolation of uridine at the wobble position (U34) of tRNA, leading to the formation of s(2)U34. This chain is tRNA-specific 2-thiouridylase MnmA, found in Gloeothece citriformis (strain PCC 7424) (Cyanothece sp. (strain PCC 7424)).